The chain runs to 236 residues: uncharacterized protein (236 aa).

The helical transmembrane segment at 52–72 (FFPYIALFQIIMLIILLILYF) threads the bilayer. A disordered region spans residues 183–236 (SDKREHDDEELSFTTEMETITTETETSSTIPHLRSLPIKSESSMETTSEETDEE). A compositionally biased stretch (low complexity) spans 196–212 (TTEMETITTETETSSTI).

The protein localises to the membrane. This is an uncharacterized protein from Acheta domesticus (House cricket).